The primary structure comprises 100 residues: Urease subunit gamma (100 aa).

It belongs to the urease gamma subunit family. As to quaternary structure, heterotrimer of UreA (gamma), UreB (beta) and UreC (alpha) subunits. Three heterotrimers associate to form the active enzyme.

It localises to the cytoplasm. It carries out the reaction urea + 2 H2O + H(+) = hydrogencarbonate + 2 NH4(+). Its pathway is nitrogen metabolism; urea degradation; CO(2) and NH(3) from urea (urease route): step 1/1. This Pseudarthrobacter chlorophenolicus (strain ATCC 700700 / DSM 12829 / CIP 107037 / JCM 12360 / KCTC 9906 / NCIMB 13794 / A6) (Arthrobacter chlorophenolicus) protein is Urease subunit gamma.